A 274-amino-acid polypeptide reads, in one-letter code: Bis(5'-nucleosyl)-tetraphosphatase, symmetrical (274 aa).

It belongs to the Ap4A hydrolase family.

The enzyme catalyses P(1),P(4)-bis(5'-adenosyl) tetraphosphate + H2O = 2 ADP + 2 H(+). Functionally, hydrolyzes diadenosine 5',5'''-P1,P4-tetraphosphate to yield ADP. This Shewanella putrefaciens (strain CN-32 / ATCC BAA-453) protein is Bis(5'-nucleosyl)-tetraphosphatase, symmetrical.